We begin with the raw amino-acid sequence, 406 residues long: DAZ-associated protein 1 (406 aa).

At Met1 the chain carries N-acetylmethionine. RRM domains follow at residues 10–97 (GKLF…RTRP) and 113–190 (NKIF…RAEP). Residues 74 to 117 (TLDGRNIDPKPCTPRGMQPERTRPKEGWQKGPRSDSSKSNKIFV) form a disordered region. Over residues 91-111 (QPERTRPKEGWQKGPRSDSSK) the composition is skewed to basic and acidic residues. An N6-acetyllysine modification is found at Lys150. The disordered stretch occupies residues 186-406 (KRAEPRDSKN…NVQGFHPYRR (221 aa)). The segment covering 195–207 (NQAPGQPGASQWG) has biased composition (polar residues). The segment covering 247 to 262 (GPPPAGRGAPPPPPPF) has biased composition (pro residues). Arg253 is subject to Omega-N-methylarginine. A compositionally biased stretch (low complexity) spans 280 to 294 (FPQGYGAPPQFSFGY). Residues 295-315 (GPPPPPPDQFAPPGVPPPPAT) show a composition bias toward pro residues. Positions 363 to 378 (SDPSQQPPSYGGPSVP) are enriched in low complexity. Residues 379 to 392 (GSGGPPAGGSGFGR) show a composition bias toward gly residues.

In terms of assembly, interacts with DAZ and DAZL. Post-translationally, acetylation at Lys-150 is predominantly observed in the nuclear fraction, and may regulate nucleocytoplasmic transport. As to expression, mainly expressed in testis. Expressed at much lower level in liver, heart and brain. Also expressed in ovary. Expressed throughout testes development, in both the prenatal and postnatal periods.

The protein localises to the cytoplasm. Its subcellular location is the nucleus. RNA-binding protein, which may be required during spermatogenesis. The sequence is that of DAZ-associated protein 1 (Dazap1) from Mus musculus (Mouse).